The sequence spans 372 residues: O-methyltransferase bfoE (372 aa).

Residue W186 participates in S-adenosyl-L-methionine binding. Catalysis depends on H285, which acts as the Proton acceptor.

This sequence belongs to the class I-like SAM-binding methyltransferase superfamily. Cation-independent O-methyltransferase family.

The protein operates within secondary metabolite biosynthesis. In terms of biological role, cytochrome P450 monooxygenase; part of the gene cluster that mediates the biosynthesis of bifonsecin B, a dimeric gamma-naphthopyrone. The first step in the biosynthesis of bifonsecin B is the production of gamma-naphthopyrone precursor YWA1 by the non-reducing polyketide synthase albA, via condensation of one acetyl-CoA starter unit with 6 malonyl-CoA units. YWA1 is then methylated by bfoE at position C-6 to yield foncesin which is further methylated at position C-8 by bfoD to produce fonsecin B. A key enzyme in the biosynthetic pathway is the cytochrome P450 monooxygenase bfoB which catalyzes the oxidative dimerization of fonsecin B to bifonsecin B. Bfob also catalyzes the oxidative dimerization of rubrofusarin B into nigerone. The stereoselectivity of bfoB is influenced by the two natural monomeric substrates; homodimerization of fonsecin B yields a stereochemically pure biaryl, M-foncerine B, while rubrofusarin B yields a mixture of enantiomers M- and P-nigerone. In Aspergillus brasiliensis (strain CBS 101740 / IMI 381727 / IBT 21946), this protein is O-methyltransferase bfoE.